We begin with the raw amino-acid sequence, 396 residues long: MAARSALCFLAIITLFVYACGRPALNFNSIYKDSRSSVKHFPRVTDSRYAYTKIDSKLDSILSELQKEQNDRDDDDDDDDEDDLFDEINDIFDDVMDDDIEEDGDDIHEVEKIEEAVDDVIDMIDDIIDDDADDDSDDVPEDLNDAQEDILELIKDSNDDKNDDETSDIIDDILDIVEDAKDADDHRPIADIRVVESLSKPGAVAEDDKESKKIDETVQELLDEIKDVVEDANDDVNDILDTDDEDEDEDVQEEKDEDIHEDVGNVMVNLMHGVHGVTGGGVNHDIYEEIEEKMDEVDDFIDDAIDEHNDDDVNDDENDDVYDEHDDLVDDVNDDADDDNDDADDDNDDADDDNDDSDDNDDSDDDNDDDDIDDVADDVLEVIVDAVEAMNTPTNV.

The N-terminal stretch at 1–21 is a signal peptide; sequence MAARSALCFLAIITLFVYACG. Coiled coils occupy residues 53 to 73, 109 to 129, 208 to 242, and 287 to 308; these read KIDS…NDRD, EVEK…DIID, DKES…ILDT, and YEEI…IDEH. The segment covering 231 to 256 has biased composition (acidic residues); that stretch reads DANDDVNDILDTDDEDEDEDVQEEKD. Disordered stretches follow at residues 231-260 and 288-378; these read DAND…EDIH and EEIE…VADD.

In terms of tissue distribution, component of the acid-insoluble and acid-soluble organic matrix of calcified layers of the shell (at protein level).

It localises to the secreted. The polypeptide is Coiled-coil domain-containing protein 1 (Lottia gigantea (Giant owl limpet)).